A 444-amino-acid chain; its full sequence is Tubulin beta-8 chain (444 aa).

The short motif at methionine 1–isoleucine 4 is the MREI motif element. GTP contacts are provided by glutamine 11, glutamate 69, serine 138, glycine 142, threonine 143, and glycine 144. Glutamate 69 contacts Mg(2+). Serine 172 is subject to Phosphoserine; by CDK1. GTP is bound by residues asparagine 204 and asparagine 226. The interval glutamine 423–alanine 444 is disordered. Over residues threonine 429–alanine 444 the composition is skewed to acidic residues. Glutamate 436 carries the post-translational modification 5-glutamyl polyglutamate.

It belongs to the tubulin family. As to quaternary structure, dimer of alpha and beta chains. A typical microtubule is a hollow water-filled tube with an outer diameter of 25 nm and an inner diameter of 15 nM. Alpha-beta heterodimers associate head-to-tail to form protofilaments running lengthwise along the microtubule wall with the beta-tubulin subunit facing the microtubule plus end conferring a structural polarity. Microtubules usually have 13 protofilaments but different protofilament numbers can be found in some organisms and specialized cells. It depends on Mg(2+) as a cofactor. Post-translationally, some glutamate residues at the C-terminus are polyglycylated, resulting in polyglycine chains on the gamma-carboxyl group. Glycylation is mainly limited to tubulin incorporated into axonemes (cilia and flagella) whereas glutamylation is prevalent in neuronal cells, centrioles, axonemes, and the mitotic spindle. Both modifications can coexist on the same protein on adjacent residues, and lowering polyglycylation levels increases polyglutamylation, and reciprocally. Cilia and flagella glycylation is required for their stability and maintenance. Flagella glycylation controls sperm motility. In terms of processing, some glutamate residues at the C-terminus are polyglutamylated, resulting in polyglutamate chains on the gamma-carboxyl group. Polyglutamylation plays a key role in microtubule severing by spastin (SPAST). SPAST preferentially recognizes and acts on microtubules decorated with short polyglutamate tails: severing activity by SPAST increases as the number of glutamates per tubulin rises from one to eight, but decreases beyond this glutamylation threshold. Glutamylation is also involved in cilia motility. Phosphorylated on Ser-172 by CDK1 during the cell cycle, from metaphase to telophase, but not in interphase. This phosphorylation inhibits tubulin incorporation into microtubules.

Its subcellular location is the cytoplasm. The protein localises to the cytoskeleton. It is found in the spindle. Functionally, tubulin is the major constituent of microtubules, a cylinder consisting of laterally associated linear protofilaments composed of alpha- and beta-tubulin heterodimers. Microtubules grow by the addition of GTP-tubulin dimers to the microtubule end, where a stabilizing cap forms. Below the cap, tubulin dimers are in GDP-bound state, owing to GTPase activity of alpha-tubulin. Has a key role in meiotic spindle assembly and oocyte maturation. The chain is Tubulin beta-8 chain (TUBB8) from Pan troglodytes (Chimpanzee).